A 392-amino-acid chain; its full sequence is Formate-dependent phosphoribosylglycinamide formyltransferase (392 aa).

Residues 22 to 23 (EL) and Glu82 each bind N(1)-(5-phospho-beta-D-ribosyl)glycinamide. Residues Arg114, Lys155, 160-165 (SSGKGQ), 195-198 (EGVV), and Glu203 contribute to the ATP site. The 190-residue stretch at 119–308 (RLAAEELGLP…EFALHVRAFL (190 aa)) folds into the ATP-grasp domain. 2 residues coordinate Mg(2+): Glu267 and Glu279. N(1)-(5-phospho-beta-D-ribosyl)glycinamide contacts are provided by residues Asp286, Lys355, and 362-363 (RR).

It belongs to the PurK/PurT family. As to quaternary structure, homodimer.

It catalyses the reaction N(1)-(5-phospho-beta-D-ribosyl)glycinamide + formate + ATP = N(2)-formyl-N(1)-(5-phospho-beta-D-ribosyl)glycinamide + ADP + phosphate + H(+). It functions in the pathway purine metabolism; IMP biosynthesis via de novo pathway; N(2)-formyl-N(1)-(5-phospho-D-ribosyl)glycinamide from N(1)-(5-phospho-D-ribosyl)glycinamide (formate route): step 1/1. Functionally, involved in the de novo purine biosynthesis. Catalyzes the transfer of formate to 5-phospho-ribosyl-glycinamide (GAR), producing 5-phospho-ribosyl-N-formylglycinamide (FGAR). Formate is provided by PurU via hydrolysis of 10-formyl-tetrahydrofolate. The sequence is that of Formate-dependent phosphoribosylglycinamide formyltransferase from Salmonella typhimurium (strain LT2 / SGSC1412 / ATCC 700720).